The sequence spans 302 residues: Acetylglutamate kinase (302 aa).

Substrate contacts are provided by residues 67-68 (GG), Arg-89, and Asn-189.

The protein belongs to the acetylglutamate kinase family. ArgB subfamily.

Its subcellular location is the cytoplasm. It carries out the reaction N-acetyl-L-glutamate + ATP = N-acetyl-L-glutamyl 5-phosphate + ADP. The protein operates within amino-acid biosynthesis; L-arginine biosynthesis; N(2)-acetyl-L-ornithine from L-glutamate: step 2/4. Catalyzes the ATP-dependent phosphorylation of N-acetyl-L-glutamate. The sequence is that of Acetylglutamate kinase from Streptomyces clavuligerus.